The chain runs to 57 residues: UPF0391 membrane protein AZOSEA39630 (57 aa).

2 helical membrane-spanning segments follow: residues 4–24 (WAII…TGVA) and 37–57 (IALA…VLVF).

The protein belongs to the UPF0391 family.

The protein resides in the cell membrane. The protein is UPF0391 membrane protein AZOSEA39630 of Aromatoleum aromaticum (strain DSM 19018 / LMG 30748 / EbN1) (Azoarcus sp. (strain EbN1)).